A 121-amino-acid chain; its full sequence is Large ribosomal subunit protein uL14c (121 aa).

In terms of assembly, component of the chloroplast large ribosomal subunit (LSU). Mature 70S chloroplast ribosomes of higher plants consist of a small (30S) and a large (50S) subunit. The 30S small subunit contains 1 molecule of ribosomal RNA (16S rRNA) and 24 different proteins. The 50S large subunit contains 3 rRNA molecules (23S, 5S and 4.5S rRNA) and 33 different proteins.

Its subcellular location is the plastid. The protein resides in the chloroplast. In terms of biological role, component of the chloroplast ribosome (chloro-ribosome), a dedicated translation machinery responsible for the synthesis of chloroplast genome-encoded proteins, including proteins of the transcription and translation machinery and components of the photosynthetic apparatus. The sequence is that of Large ribosomal subunit protein uL14c from Spinacia oleracea (Spinach).